The sequence spans 689 residues: Beta-adrenergic receptor kinase 1 (689 aa).

The tract at residues 1–190 (MADLEAVLAD…ELNIHLTMND (190 aa)) is N-terminal. The RGS domain maps to 54 to 175 (TFEKIFSQKL…IESDKFTRFC (122 aa)). The region spanning 191-453 (FSVHRIIGRG…AQEVKESPFF (263 aa)) is the Protein kinase domain. ATP is bound by residues 197–205 (IGRGGFGEV) and Lys-220. The Proton acceptor role is filled by Asp-317. One can recognise an AGC-kinase C-terminal domain in the interval 454-521 (RSLDWQMVFL…TISERWQQEV (68 aa)). In terms of domain architecture, PH spans 558–652 (DCIMHGYMSK…WKKELRDAYR (95 aa)). Phosphoserine is present on Ser-670.

It belongs to the protein kinase superfamily. AGC Ser/Thr protein kinase family. GPRK subfamily. As to quaternary structure, interacts with the heterodimer formed by GNB1 and GNG2. Interacts with GIT1. Interacts with, and phosphorylates chemokine-stimulated CCR5. Interacts with ARRB1. Interacts with LPAR1 and LPAR2. Interacts with RALA in response to LPAR1 activation. ADRBK1 and RALA mutually inhibit each other's binding to LPAR1. Interacts with ADRB2.

It localises to the cytoplasm. The protein localises to the cell membrane. The protein resides in the postsynapse. It is found in the presynapse. It carries out the reaction [beta-adrenergic receptor] + ATP = [beta-adrenergic receptor]-phosphate + ADP + H(+). In contrast to other AGC family kinases, the catalytic activity is solely regulated by the binding of substrates and ligands, not by phosphorylation of the kinase domain. Specifically phosphorylates the agonist-occupied form of the beta-adrenergic and closely related receptors, probably inducing a desensitization of them. Key regulator of LPAR1 signaling. Competes with RALA for binding to LPAR1 thus affecting the signaling properties of the receptor. Desensitizes LPAR1 and LPAR2 in a phosphorylation-independent manner. Positively regulates ciliary smoothened (SMO)-dependent Hedgehog (Hh) signaling pathway by facilitating the trafficking of SMO into the cilium and the stimulation of SMO activity. Inhibits relaxation of airway smooth muscle in response to blue light. The protein is Beta-adrenergic receptor kinase 1 of Mesocricetus auratus (Golden hamster).